The sequence spans 129 residues: Glycine cleavage system H protein (129 aa).

The Lipoyl-binding domain occupies 24–106 (EAVVGITEHA…YGAGWLFRIK (83 aa)). An N6-lipoyllysine modification is found at K65.

This sequence belongs to the GcvH family. The glycine cleavage system is composed of four proteins: P, T, L and H. It depends on (R)-lipoate as a cofactor.

Functionally, the glycine cleavage system catalyzes the degradation of glycine. The H protein shuttles the methylamine group of glycine from the P protein to the T protein. This Aeromonas salmonicida (strain A449) protein is Glycine cleavage system H protein.